The chain runs to 244 residues: Octanoyltransferase (244 aa).

A BPL/LPL catalytic domain is found at 49–237 (VAPGNFLIFC…HLTALFELHI (189 aa)). Substrate-binding positions include 94 to 101 (RGGDITYH), 167 to 169 (AMG), and 180 to 182 (GFA). Cys-198 functions as the Acyl-thioester intermediate in the catalytic mechanism.

The protein belongs to the LipB family.

Its subcellular location is the cytoplasm. The enzyme catalyses octanoyl-[ACP] + L-lysyl-[protein] = N(6)-octanoyl-L-lysyl-[protein] + holo-[ACP] + H(+). It functions in the pathway protein modification; protein lipoylation via endogenous pathway; protein N(6)-(lipoyl)lysine from octanoyl-[acyl-carrier-protein]: step 1/2. Its function is as follows. Catalyzes the transfer of endogenously produced octanoic acid from octanoyl-acyl-carrier-protein onto the lipoyl domains of lipoate-dependent enzymes. Lipoyl-ACP can also act as a substrate although octanoyl-ACP is likely to be the physiological substrate. The protein is Octanoyltransferase of Cytophaga hutchinsonii (strain ATCC 33406 / DSM 1761 / CIP 103989 / NBRC 15051 / NCIMB 9469 / D465).